The following is a 136-amino-acid chain: Serine--glyoxylate aminotransferase (136 aa).

This sequence belongs to the class-V pyridoxal-phosphate-dependent aminotransferase family. Homodimer. Requires pyridoxal 5'-phosphate as cofactor. Expressed in leaves but not in root tissue or seedlings.

The protein localises to the peroxisome. The enzyme catalyses glyoxylate + L-serine = 3-hydroxypyruvate + glycine. The catalysed reaction is glyoxylate + L-alanine = glycine + pyruvate. With respect to regulation, inhibited by aminooxyacetate. The protein is Serine--glyoxylate aminotransferase of Zea mays (Maize).